A 69-amino-acid polypeptide reads, in one-letter code: Photosystem I reaction center subunit IV (69 aa).

The protein belongs to the PsaE family.

It localises to the cellular thylakoid membrane. Stabilizes the interaction between PsaC and the PSI core, assists the docking of the ferredoxin to PSI and interacts with ferredoxin-NADP oxidoreductase. The sequence is that of Photosystem I reaction center subunit IV from Prochlorococcus marinus (strain MIT 9515).